Here is a 362-residue protein sequence, read N- to C-terminus: Chorismate synthase (362 aa).

Residues arginine 47 and arginine 53 each coordinate NADP(+). FMN-binding positions include 124–126 (RSS), glycine 285, 300–304 (KPTAT), and arginine 326.

It belongs to the chorismate synthase family. In terms of assembly, homotetramer. It depends on FMNH2 as a cofactor.

The enzyme catalyses 5-O-(1-carboxyvinyl)-3-phosphoshikimate = chorismate + phosphate. It participates in metabolic intermediate biosynthesis; chorismate biosynthesis; chorismate from D-erythrose 4-phosphate and phosphoenolpyruvate: step 7/7. Its function is as follows. Catalyzes the anti-1,4-elimination of the C-3 phosphate and the C-6 proR hydrogen from 5-enolpyruvylshikimate-3-phosphate (EPSP) to yield chorismate, which is the branch point compound that serves as the starting substrate for the three terminal pathways of aromatic amino acid biosynthesis. This reaction introduces a second double bond into the aromatic ring system. This is Chorismate synthase from Cyanothece sp. (strain PCC 7425 / ATCC 29141).